Reading from the N-terminus, the 533-residue chain is Conglutin beta 2 (533 aa).

A signal peptide spans 1–30 (MGKMRVRFPTLVLVLGIVFLMAVSIGIAYG). The propeptide occupies 31–108 (EKDVLKSHER…EQQQGSPSYS (78 aa)). Composition is skewed to basic and acidic residues over residues 37–51 (SHER…EWQP) and 79–99 (SGYE…REQE). Disordered regions lie at residues 37 to 123 (SHER…QRFQ) and 315 to 337 (KHAQ…LRSN). 2 Cupin type-1 domains span residues 115 to 273 (YHFS…EEIQ) and 332 to 494 (FNLR…EDIE). Residues Asn-363 and Asn-444 are each glycosylated (N-linked (GlcNAc...) asparagine). The segment at 503-533 (SYFANGQPQQQQQQQSEKEGRRGRRGSSLPF) is disordered.

It belongs to the 7S seed storage protein family. In terms of assembly, multimers. Give rise to a complex array of processed forms, due to a large number of processing sites and changes in glycosylation.

Its function is as follows. Seed storage protein. Accumulates during seed development and is hydrolyzed after germination to provide a carbon and nitrogen source for the developing seedling. In terms of biological role, has a lectin-like activity. The sequence is that of Conglutin beta 2 from Lupinus albus (White lupine).